The primary structure comprises 284 residues: NH(3)-dependent NAD(+) synthetase (284 aa).

51–58 (GISGGIDS) serves as a coordination point for ATP. Residue Asp-57 participates in Mg(2+) binding. Position 148 (Arg-148) interacts with deamido-NAD(+). Thr-168 provides a ligand contact to ATP. Glu-173 contacts Mg(2+). Deamido-NAD(+)-binding residues include Lys-181 and Asp-188. ATP-binding residues include Lys-197 and Thr-219. Residue 268–269 (HK) participates in deamido-NAD(+) binding.

This sequence belongs to the NAD synthetase family. As to quaternary structure, homodimer.

The catalysed reaction is deamido-NAD(+) + NH4(+) + ATP = AMP + diphosphate + NAD(+) + H(+). Its pathway is cofactor biosynthesis; NAD(+) biosynthesis; NAD(+) from deamido-NAD(+) (ammonia route): step 1/1. Functionally, catalyzes the ATP-dependent amidation of deamido-NAD to form NAD. Uses ammonia as a nitrogen source. This chain is NH(3)-dependent NAD(+) synthetase, found in Burkholderia mallei (strain NCTC 10247).